A 428-amino-acid chain; its full sequence is UDP-N-acetylglucosamine 1-carboxyvinyltransferase (428 aa).

25–26 provides a ligand contact to phosphoenolpyruvate; it reads KN. R102 is a UDP-N-acetyl-alpha-D-glucosamine binding site. The Proton donor role is filled by C126. C126 is subject to 2-(S-cysteinyl)pyruvic acid O-phosphothioketal. UDP-N-acetyl-alpha-D-glucosamine contacts are provided by D316 and V338.

Belongs to the EPSP synthase family. MurA subfamily.

Its subcellular location is the cytoplasm. The catalysed reaction is phosphoenolpyruvate + UDP-N-acetyl-alpha-D-glucosamine = UDP-N-acetyl-3-O-(1-carboxyvinyl)-alpha-D-glucosamine + phosphate. It functions in the pathway cell wall biogenesis; peptidoglycan biosynthesis. In terms of biological role, cell wall formation. Adds enolpyruvyl to UDP-N-acetylglucosamine. This chain is UDP-N-acetylglucosamine 1-carboxyvinyltransferase, found in Anaplasma marginale (strain Florida).